The sequence spans 581 residues: Guanine nucleotide-binding protein-like 3 homolog (581 aa).

Positions 1–49 (MALKRLKTKKSKRLTGRLKHKIEKKVRDHNKKERRAAKKNPKKGSKKQK) are enriched in basic residues. The segment at 1-50 (MALKRLKTKKSKRLTGRLKHKIEKKVRDHNKKERRAAKKNPKKGSKKQKL) is disordered. Residues 64–108 (LKEVEEAKQRQEAERLARREAFKAEREQNKFKTLESMVEDADMRS) adopt a coiled-coil conformation. At S99 the chain carries Phosphoserine. A CP-type G domain is found at 141–325 (FKEFRKVIEN…LIDCPGIVFT (185 aa)). GTP-binding positions include 189-192 (NKAD), 274-281 (GIPNVGKS), and 318-321 (DCPG). The span at 500 to 517 (KPAKGRKRKLDEEKEKVD) shows a compositional bias: basic and acidic residues. Residues 500-519 (KPAKGRKRKLDEEKEKVDPS) form a disordered region.

The protein belongs to the TRAFAC class YlqF/YawG GTPase family.

The protein localises to the nucleus. It is found in the nucleolus. Functionally, may play a role in regulating cellular proliferation. In Drosophila melanogaster (Fruit fly), this protein is Guanine nucleotide-binding protein-like 3 homolog (Ns1).